The chain runs to 343 residues: tRNA-splicing endonuclease (343 aa).

Catalysis depends on residues Tyr277, His288, and Lys319.

This sequence belongs to the tRNA-intron endonuclease family. Archaeal long subfamily. Homodimer.

The catalysed reaction is pretRNA = a 3'-half-tRNA molecule with a 5'-OH end + a 5'-half-tRNA molecule with a 2',3'-cyclic phosphate end + an intron with a 2',3'-cyclic phosphate and a 5'-hydroxyl terminus.. Endonuclease that removes tRNA introns. Cleaves pre-tRNA at the 5' and 3' splice sites to release the intron. The products are an intron and two tRNA half-molecules bearing 2',3' cyclic phosphate and 5'-OH termini. Recognizes a pseudosymmetric substrate in which 2 bulged loops of 3 bases are separated by a stem of 4 bp. This is tRNA-splicing endonuclease from Halobacterium salinarum (strain ATCC 29341 / DSM 671 / R1).